The primary structure comprises 306 residues: UDP-N-acetylenolpyruvoylglucosamine reductase (306 aa).

Residues 33–197 (TGGEADFYLS…LEAAFTLEPG (165 aa)) enclose the FAD-binding PCMH-type domain. The active site involves R176. The active-site Proton donor is S226. The active site involves E296.

The protein belongs to the MurB family. FAD is required as a cofactor.

It localises to the cytoplasm. It carries out the reaction UDP-N-acetyl-alpha-D-muramate + NADP(+) = UDP-N-acetyl-3-O-(1-carboxyvinyl)-alpha-D-glucosamine + NADPH + H(+). It participates in cell wall biogenesis; peptidoglycan biosynthesis. Functionally, cell wall formation. In Staphylococcus epidermidis (strain ATCC 35984 / DSM 28319 / BCRC 17069 / CCUG 31568 / BM 3577 / RP62A), this protein is UDP-N-acetylenolpyruvoylglucosamine reductase.